The following is a 381-amino-acid chain: E3 ubiquitin-protein ligase KCMF1 (381 aa).

The residue at position 2 (Ser2) is an N-acetylserine. A Phosphoserine modification is found at Ser2. A ZZ-type zinc finger spans residues 4-60; that stretch reads HEGVSCDACLKGNFRGRRYKCLICYDYDLCASCYESGATTTRHTTDHPMQCILTRVD. Zn(2+)-binding residues include Cys9, Cys12, Cys24, Cys27, Cys33, Cys36, His46, and His50. The C2H2-type zinc finger occupies 78-101; the sequence is FTCPYCGKMGYTETSLQEHVTSEH. Positions 154 to 194 are disordered; sequence MFHPGRGLGGPRARRSNMHFTSSSTGGLSSSQSSYSPSSRE. A phosphoserine mark is found at Ser169, Ser189, and Ser212. Residues 175–192 are compositionally biased toward low complexity; sequence SSSTGGLSSSQSSYSPSS. Residues 224–259 are a coiled coil; sequence ASQLQQLQMQLQLERQHAQAARQQLETARNASRRTN. Ser335 and Ser336 each carry phosphoserine.

Belongs to the KCMF1 family. Component of the SIFI complex, composed of KCMF1, UBR4 and calmodulin (CALM1, CALM2 or CALM3). Testis, liver, kidney, heart and skeletal muscle.

It localises to the cytoplasm. Its subcellular location is the late endosome. The protein localises to the lysosome. It catalyses the reaction S-ubiquitinyl-[E2 ubiquitin-conjugating enzyme]-L-cysteine + [acceptor protein]-L-lysine = [E2 ubiquitin-conjugating enzyme]-L-cysteine + N(6)-ubiquitinyl-[acceptor protein]-L-lysine.. It functions in the pathway protein modification; protein ubiquitination. E3 ubiquitin-protein ligase which accepts ubiquitin from an E2 ubiquitin-conjugating enzyme and then transfers it to targeted substrates, promoting their degradation by the proteasome. Together with UBR4, component of the N-end rule pathway: ubiquitinates proteins bearing specific N-terminal residues that are destabilizing according to the N-end rule, leading to their degradation. Does not ubiquitinate proteins that are acetylated at the N-terminus. Together with UBR4, part of a protein quality control pathway that catalyzes ubiquitination and degradation of proteins that have been oxidized in response to reactive oxygen species (ROS): recognizes proteins with an Arg-CysO3(H) degron at the N-terminus, and mediates assembly of heterotypic 'Lys-63'-/'Lys-27'-linked branched ubiquitin chains on oxidized proteins, leading to their degradation by autophagy. Catalytic component of the SIFI complex, a multiprotein complex required to inhibit the mitochondrial stress response after a specific stress event has been resolved: ubiquitinates and degrades (1) components of the HRI-mediated signaling of the integrated stress response, such as DELE1 and EIF2AK1/HRI, as well as (2) unimported mitochondrial precursors. Within the SIFI complex, UBR4 initiates ubiquitin chain that are further elongated or branched by KCMF1. The sequence is that of E3 ubiquitin-protein ligase KCMF1 from Mus musculus (Mouse).